The following is a 113-amino-acid chain: T cell receptor alpha variable 8-3 (113 aa).

Positions methionine 1–alanine 20 are cleaved as a signal peptide. The Ig-like domain maps to glutamine 21–glycine 113. Cysteine 42 and cysteine 110 form a disulfide bridge. Asparagine 43 carries an N-linked (GlcNAc...) asparagine glycan.

In terms of assembly, alpha-beta TR is a heterodimer composed of an alpha and beta chain; disulfide-linked. The alpha-beta TR is associated with the transmembrane signaling CD3 coreceptor proteins to form the TR-CD3 (TcR or TCR). The assembly of alpha-beta TR heterodimers with CD3 occurs in the endoplasmic reticulum where a single alpha-beta TR heterodimer associates with one CD3D-CD3E heterodimer, one CD3G-CD3E heterodimer and one CD247 homodimer forming a stable octameric structure. CD3D-CD3E and CD3G-CD3E heterodimers preferentially associate with TR alpha and TR beta chains, respectively. The association of the CD247 homodimer is the last step of TcR assembly in the endoplasmic reticulum and is required for transport to the cell surface.

The protein resides in the cell membrane. V region of the variable domain of T cell receptor (TR) alpha chain that participates in the antigen recognition. Alpha-beta T cell receptors are antigen specific receptors which are essential to the immune response and are present on the cell surface of T lymphocytes. Recognize peptide-major histocompatibility (MH) (pMH) complexes that are displayed by antigen presenting cells (APC), a prerequisite for efficient T cell adaptive immunity against pathogens. Binding of alpha-beta TR to pMH complex initiates TR-CD3 clustering on the cell surface and intracellular activation of LCK that phosphorylates the ITAM motifs of CD3G, CD3D, CD3E and CD247 enabling the recruitment of ZAP70. In turn ZAP70 phosphorylates LAT, which recruits numerous signaling molecules to form the LAT signalosome. The LAT signalosome propagates signal branching to three major signaling pathways, the calcium, the mitogen-activated protein kinase (MAPK) kinase and the nuclear factor NF-kappa-B (NF-kB) pathways, leading to the mobilization of transcription factors that are critical for gene expression and essential for T cell growth and differentiation. The T cell repertoire is generated in the thymus, by V-(D)-J rearrangement. This repertoire is then shaped by intrathymic selection events to generate a peripheral T cell pool of self-MH restricted, non-autoaggressive T cells. Post-thymic interaction of alpha-beta TR with the pMH complexes shapes TR structural and functional avidity. The protein is T cell receptor alpha variable 8-3 of Homo sapiens (Human).